Here is a 301-residue protein sequence, read N- to C-terminus: Protoheme IX farnesyltransferase (301 aa).

Transmembrane regions (helical) follow at residues 20–42 (FTEL…GMWL), 55–75 (VDVI…SGAF), 105–125 (ALMV…MTTW), 126–146 (QAGV…SLYA), 150–172 (LVSN…WFAV), 176–198 (FSIV…FYAI), 227–247 (MFFW…LGIV), 249–269 (VVLA…GFKM), and 280–300 (FVYS…ISIF).

Belongs to the UbiA prenyltransferase family. Protoheme IX farnesyltransferase subfamily. Interacts with CtaA.

Its subcellular location is the cell membrane. It catalyses the reaction heme b + (2E,6E)-farnesyl diphosphate + H2O = Fe(II)-heme o + diphosphate. Its pathway is porphyrin-containing compound metabolism; heme O biosynthesis; heme O from protoheme: step 1/1. Converts heme B (protoheme IX) to heme O by substitution of the vinyl group on carbon 2 of heme B porphyrin ring with a hydroxyethyl farnesyl side group. This chain is Protoheme IX farnesyltransferase, found in Listeria monocytogenes serotype 4b (strain CLIP80459).